A 229-amino-acid chain; its full sequence is Prolactin (229 aa).

Positions methionine 1–serine 30 are cleaved as a signal peptide. Cysteines 34 and 41 form a disulfide. Phosphoserine is present on residues serine 56, serine 64, and serine 120. Cystine bridges form between cysteine 88–cysteine 204 and cysteine 221–cysteine 229.

It belongs to the somatotropin/prolactin family. As to quaternary structure, interacts with PRLR.

It is found in the secreted. In terms of biological role, prolactin acts primarily on the mammary gland by promoting lactation. The protein is Prolactin (PRL) of Cervus elaphus (Red deer).